The chain runs to 567 residues: Geranylgeranyl transferase type-2 subunit alpha (567 aa).

6 PFTA repeats span residues 44–78, 88–122, 124–158, 159–193, 207–241, and 363–397; these read LDESVLELTSQILGANPDFATLWNCRREVLQHLET, LVKAELGFLESCLRVNPKSYGTWHHRCWLLSRLPE, NWARELELCARFLEADERNFHCWDYRRFVAAQAAV, APAEELAFTDSLITRNFSNYSSWHYRSCLLPQLHP, VLLKELELVQNAFFTDPNDQSAWFYHRWLLGRAEP, and VLQSELESCKELQELEPENKWCLLTIILLMRALDP. S98 carries the phosphoserine modification. LRR repeat units lie at residues 442-463, 464-486, 487-508, 509-530, and 534-555; these read DVRVLHLAHKDLTVLCHLEQLL, LVTHLDLSHNRLRALPPALAALR, CLEVLQASDNALENVDGVANLP, RLQELLLCNNRLQQSAAIQPLV, and RLVLLNLQGNSLCQEEGIQERL.

Belongs to the protein prenyltransferase subunit alpha family. Heterotrimer composed of RABGGTA, RABGGTB and CHM; within this trimer, RABGGTA and RABGGTB form the catalytic component B, while CHM (component A) mediates peptide substrate binding. The Rab GGTase dimer (RGGT) interacts with CHM (component A) prior to Rab protein binding; the association is stabilized by geranylgeranyl pyrophosphate (GGpp). The CHM:RGGT:Rab complex is destabilized by GGpp. Interacts with non-phosphorylated form of RAB8A; phosphorylation of RAB8A at 'Thr-72' disrupts this interaction. In terms of tissue distribution, most abundant in the heart, brain, spleen and liver. Less in the lung, muscle, kidney and testis; in these tissues less abundant than the beta subunit.

It carries out the reaction geranylgeranyl diphosphate + L-cysteinyl-[protein] = S-geranylgeranyl-L-cysteinyl-[protein] + diphosphate. With respect to regulation, the enzymatic reaction requires the aid of a Rab escort protein (also called component A), such as CHM. Functionally, catalyzes the transfer of a geranylgeranyl moiety from geranylgeranyl diphosphate to both cysteines of Rab proteins with the C-terminal sequence -XXCC, -XCXC and -CCXX, such as RAB1A, RAB3A, RAB5A and RAB7A. This chain is Geranylgeranyl transferase type-2 subunit alpha (Rabggta), found in Rattus norvegicus (Rat).